A 254-amino-acid chain; its full sequence is 5'-nucleotidase SurE (254 aa).

Residues aspartate 8, aspartate 9, serine 40, and asparagine 93 each coordinate a divalent metal cation.

The protein belongs to the SurE nucleotidase family. Requires a divalent metal cation as cofactor.

Its subcellular location is the cytoplasm. The catalysed reaction is a ribonucleoside 5'-phosphate + H2O = a ribonucleoside + phosphate. Functionally, nucleotidase that shows phosphatase activity on nucleoside 5'-monophosphates. This Actinobacillus pleuropneumoniae serotype 5b (strain L20) protein is 5'-nucleotidase SurE.